The primary structure comprises 69 residues: Calcium-binding protein (69 aa).

2 consecutive EF-hand domains span residues 2 to 37 (VNRTEAAQLLKHLDRDKSGKISSQELMEFLHTVNCP) and 38 to 69 (FKKEQVEKFIKQHDKDGDGQLNTDELLDVLCS). Residues Asp15, Asp17, Ser19, Lys21, Glu26, Asp51, Asp53, Asp55, Gln57, and Glu62 each contribute to the Ca(2+) site.

The protein is Calcium-binding protein of Schistosoma mansoni (Blood fluke).